A 388-amino-acid chain; its full sequence is 2-Hydroxyacid oxidase (388 aa).

A disordered region spans residues 1–21 (MENQFKNNNNSSSIETSNQFS). One can recognise an FMN hydroxy acid dehydrogenase domain in the interval 26 to 384 (NRLDSFVSVS…NNSIIWDQNK (359 aa)). A glyoxylate-binding site is contributed by Y52. FMN contacts are provided by residues 105–107 (PWA), S134, 156–158 (QLY), and T184. A glyoxylate-binding site is contributed by Y158. Position 193 (R193) interacts with glyoxylate. FMN-binding residues include K255 and S277. Positions 279 and 282 each coordinate glyoxylate. The active-site Proton acceptor is the H279. FMN is bound by residues 310-314 (DGGIR) and 333-334 (GR).

It belongs to the FMN-dependent alpha-hydroxy acid dehydrogenase family. In terms of assembly, homotetramer. The cofactor is FMN.

The enzyme catalyses glycolate + O2 = glyoxylate + H2O2. It carries out the reaction a (2S)-2-hydroxycarboxylate + O2 = a 2-oxocarboxylate + H2O2. In terms of biological role, catalyzes the oxidation of glycolate to glyoxylate, with a reduction of O2 to H2O2. May use other 2-hydroxyacids as substrates. The chain is 2-Hydroxyacid oxidase (haox) from Dictyostelium discoideum (Social amoeba).